Here is a 282-residue protein sequence, read N- to C-terminus: Bifunctional protein FolD (282 aa).

NADP(+) contacts are provided by residues 164-166 (GRS) and Ser-189.

This sequence belongs to the tetrahydrofolate dehydrogenase/cyclohydrolase family. As to quaternary structure, homodimer.

It catalyses the reaction (6R)-5,10-methylene-5,6,7,8-tetrahydrofolate + NADP(+) = (6R)-5,10-methenyltetrahydrofolate + NADPH. The enzyme catalyses (6R)-5,10-methenyltetrahydrofolate + H2O = (6R)-10-formyltetrahydrofolate + H(+). Its pathway is one-carbon metabolism; tetrahydrofolate interconversion. Its function is as follows. Catalyzes the oxidation of 5,10-methylenetetrahydrofolate to 5,10-methenyltetrahydrofolate and then the hydrolysis of 5,10-methenyltetrahydrofolate to 10-formyltetrahydrofolate. This is Bifunctional protein FolD from Lactobacillus gasseri (strain ATCC 33323 / DSM 20243 / BCRC 14619 / CIP 102991 / JCM 1131 / KCTC 3163 / NCIMB 11718 / NCTC 13722 / AM63).